The sequence spans 733 residues: Tudor domain-containing protein 3 (733 aa).

Positions 241-281 are disordered; sequence TRTFGGGGNAGGNLANPGSSYKSRDTYQRKREEREKPWTEN. The segment covering 262-281 has biased composition (basic and acidic residues); it reads KSRDTYQRKREEREKPWTEN. The UBA domain occupies 290-330; sequence LVDERALRDIMEMGFNREAARQALLDNNNNLEVALNLLLTR. Positions 333–630 are disordered; that stretch reads QPRAAPVEQS…RSGPIKGPRD (298 aa). Residues 346–355 are compositionally biased toward basic residues; it reads PRGKGRGKGR. Positions 392–408 are enriched in polar residues; the sequence is PSQQDHQTKMNFSNSDQ. A compositionally biased stretch (basic and acidic residues) spans 420 to 441; that stretch reads PRNDGRSQRNDRPPRFQKDGDF. Positions 446–455 are enriched in polar residues; the sequence is PASSSFSQPQ. Basic and acidic residues predominate over residues 456–478; sequence KWRDGERTGRGGGPERWKNESQD. A compositionally biased stretch (polar residues) spans 484–499; the sequence is VSYSSSFSKSREQQGA. Residues 559 to 570 show a composition bias toward basic and acidic residues; sequence HSQDALGKKDFQ. One can recognise a Tudor domain in the interval 639-699; that stretch reads NWKAGDQCLA…KPLHMDDDED (61 aa). Residues 706–716 show a composition bias toward basic and acidic residues; sequence LEFRRGGDGQP. The tract at residues 706 to 733 is disordered; it reads LEFRRGGDGQPRRSRPTQQYYQPPRARD.

In terms of assembly, component of mRNA stress granules.

Its subcellular location is the cytoplasm. The protein resides in the nucleus. Scaffolding protein that specifically recognizes and binds dimethylarginine-containing proteins. Plays a role in the regulation of translation of target mRNAs by binding Arg/Gly-rich motifs (GAR) in dimethylarginine-containing proteins. In nucleus, acts as a coactivator: recognizes and binds asymmetric dimethylation on the core histone tails associated with transcriptional activation (H3R17me2a and H4R3me2a) and recruits proteins at these arginine-methylated loci. In cytoplasm, acts as an antiviral factor that participates in the assembly of stress granules together with G3BP1. The protein is Tudor domain-containing protein 3 (tdrd3) of Danio rerio (Zebrafish).